The sequence spans 99 residues: Large ribosomal subunit protein uL23 (99 aa).

This sequence belongs to the universal ribosomal protein uL23 family. Part of the 50S ribosomal subunit. Contacts protein L29, and trigger factor when it is bound to the ribosome.

Its function is as follows. One of the early assembly proteins it binds 23S rRNA. One of the proteins that surrounds the polypeptide exit tunnel on the outside of the ribosome. Forms the main docking site for trigger factor binding to the ribosome. The polypeptide is Large ribosomal subunit protein uL23 (Leifsonia xyli subsp. xyli (strain CTCB07)).